The sequence spans 192 residues: Late embryogenesis abundant protein 47 (192 aa).

The Nuclear localization signal (NLS) signature appears at 5 to 9 (QLQKP). 2 consecutive SMP domains span residues 68–125 (ITIG…LNAR) and 133–190 (TTLA…RINQ). Residues 146 to 174 (LPSDKAATRKDAEGVTGAEMRNDPHLTTY) are disordered. Over residues 147–158 (PSDKAATRKDAE) the composition is skewed to basic and acidic residues.

Belongs to the LEA type SMP family.

Its subcellular location is the cytoplasm. The protein resides in the nucleus. LEA proteins are late embryonic proteins abundant in higher plant seed embryos. The function of those proteins is not known. The chain is Late embryogenesis abundant protein 47 from Arabidopsis thaliana (Mouse-ear cress).